Here is an 82-residue protein sequence, read N- to C-terminus: Penaeidin-3d (82 aa).

Residues 1–19 (MRLVVCLVFLASFALVCQG) form the signal peptide. Gln-20 is modified (pyrrolidone carboxylic acid). Intrachain disulfides connect Cys-51–Cys-66, Cys-55–Cys-73, and Cys-67–Cys-74. Residue Ser-81 is modified to Serine amide.

The protein belongs to the penaeidin family.

It is found in the cytoplasmic granule. In terms of biological role, antibacterial and antifungal activity. Presents chitin-binding activity. This chain is Penaeidin-3d, found in Penaeus vannamei (Whiteleg shrimp).